A 295-amino-acid polypeptide reads, in one-letter code: GTPase Era (295 aa).

Residues 3-170 enclose the Era-type G domain; it reads KSGFVTIVGR…VDLMKTELPE (168 aa). Positions 11-18 are G1; the sequence is GRPNVGKS. Residue 11 to 18 participates in GTP binding; that stretch reads GRPNVGKS. The tract at residues 37 to 41 is G2; it reads QTTRN. Residues 58–61 form a G3 region; it reads DTPG. GTP is bound by residues 58 to 62 and 120 to 123; these read DTPGI and NKID. The G4 stretch occupies residues 120-123; it reads NKID. Residues 149–151 form a G5 region; the sequence is IAA. The KH type-2 domain maps to 201-278; the sequence is LRDEVPHGIA…NVKIWVKVRK (78 aa).

This sequence belongs to the TRAFAC class TrmE-Era-EngA-EngB-Septin-like GTPase superfamily. Era GTPase family. Monomer.

The protein localises to the cytoplasm. It localises to the cell membrane. Functionally, an essential GTPase that binds both GDP and GTP, with rapid nucleotide exchange. Plays a role in 16S rRNA processing and 30S ribosomal subunit biogenesis and possibly also in cell cycle regulation and energy metabolism. This Clostridium botulinum (strain Alaska E43 / Type E3) protein is GTPase Era.